The chain runs to 105 residues: MKTILLFLGVCAVGASMMTGGWTNKDVNDEEVKKLAIFASTKFNEKSNSLVFEKMCKILEAKSQLVAGMLYDITFEASPTVCKKNDKNYVPIYQCPLLPCAPRKI.

An N-terminal signal peptide occupies residues 1–23 (MKTILLFLGVCAVGASMMTGGWT).

This sequence belongs to the cystatin family. In terms of processing, contains 2 disulfide bonds. As to expression, expressed by the venom gland.

It is found in the secreted. In terms of biological role, inhibits various C1 cysteine proteases. This protein has no toxic activity and its function in the venom is unknown. It may play a role as a housekeeping or regulatory protein. The sequence is that of U7-hexatoxin-Hi1a from Hadronyche infensa (Fraser island funnel-web spider).